Reading from the N-terminus, the 3033-residue chain is Genome polyprotein (3033 aa).

Residue Ser-2 is modified to N-acetylserine; by host. An interaction with STAT1 region spans residues 2 to 23 (STNPKPQRKTKRNTNRRPQDVK). The tract at residues 2–58 (STNPKPQRKTKRNTNRRPQDVKFPGGGQIVGGVYLLPRRGPRLGVRATRKTSERSQP) is interaction with EIF2AK2/PKR. Residues 2 to 59 (STNPKPQRKTKRNTNRRPQDVKFPGGGQIVGGVYLLPRRGPRLGVRATRKTSERSQPR) form an interaction with DDX3X region. Positions 2-75 (STNPKPQRKT…PKDRRSAGKS (74 aa)) are disordered. Residues 2-168 (STNPKPQRKT…EDGINYATGN (167 aa)) are Cytoplasmic-facing. 2 short sequence motifs (nuclear localization signal) span residues 5–13 (PKPQRKTKR) and 38–43 (PRRGPR). Over residues 7-16 (PQRKTKRNTN) the composition is skewed to basic residues. The segment covering 32–47 (GGVYLLPRRGPRLGVR) has biased composition (low complexity). The residue at position 53 (Ser-53) is a Phosphoserine; by host. 2 consecutive short sequence motifs (nuclear localization signal) follow at residues 58 to 64 (PRGRRQP) and 66 to 71 (PKDRRS). A phosphoserine; by host mark is found at Ser-99 and Ser-116. An important for endoplasmic reticulum and mitochondrial localization region spans residues 112–152 (PRHRSRNLGKVIDTLTCGFADLMGYIPVVGAPVGGVARALA). The interaction with APOA2 stretch occupies residues 122–173 (VIDTLTCGFADLMGYIPVVGAPVGGVARALAHGVRVLEDGINYATGNLPGCS). The interval 164 to 167 (YATG) is important for lipid droplets localization. Residues 169-189 (LPGCSFSIFLLALLSCMSVPV) form a helical membrane-spanning segment. The propeptide at 178–191 (LLALLSCMSVPVSA) is ER anchor for the core protein, removed in mature form by host signal peptidase. The Lumenal segment spans residues 190-358 (SAVEVKNTSQ…TGAHWGVMFG (169 aa)). N-linked (GlcNAc...) asparagine; by host glycans are attached at residues Asn-196, Asn-209, and Asn-234. The tract at residues 265–296 (IVVSATFCSALYIGDVCGAIMIAAQATIISPQ) is important for fusion. N-linked (GlcNAc...) asparagine; by host glycosylation occurs at Asn-305. A helical membrane pass occupies residues 359 to 379 (LAYFSMQGAWAKVVVILLLTA). The Lumenal portion of the chain corresponds to 380 to 729 (GVDAQTHTIS…WEWVVLLFLL (350 aa)). The tract at residues 385–412 (THTISGHAARTTHGLVSLFTPGSQQNIQ) is HVR1. N-linked (GlcNAc...) (high mannose) asparagine; by host glycosylation is found at Asn-417, Asn-423, and Asn-430. Cystine bridges form between Cys-429-Cys-554, Cys-452-Cys-459, Cys-488-Cys-496, and Cys-505-Cys-510. Asn-448 is a glycosylation site (N-linked (GlcNAc...) asparagine; by host). The HVR2 stretch occupies residues 475–480 (EENVTN). N-linked (GlcNAc...) asparagine; by host glycosylation is present at Asn-477. Positions 482-495 (DNMRPYCWHYPPRP) are CD81-binding 1. The N-linked (GlcNAc...) asparagine; by host glycan is linked to Asn-534. Residues 546–553 (PPRGAWFG) are CD81-binding 2. N-linked (GlcNAc...) asparagine; by host glycosylation is present at Asn-558. Intrachain disulfides connect Cys-566-Cys-571, Cys-585-Cys-589, Cys-601-Cys-624, and Cys-611-Cys-648. N-linked (GlcNAc...) (high mannose) asparagine; by host glycosylation is found at Asn-627 and Asn-649. Cysteines 656 and 681 form a disulfide. The PKR/eIF2-alpha phosphorylation homology domain (PePHD) stretch occupies residues 664 to 675 (SQLSPLLHSTTE). Residues 730–750 (LADARVCACLWMLLLLGQAEA) traverse the membrane as a helical segment. Over 751–761 (ALEKLVILHAA) the chain is Lumenal. The helical transmembrane segment at 762–782 (SAASSHGMLCFIIFFIAAWYI) threads the bilayer. The Cytoplasmic segment spans residues 783–786 (KGRV). The helical transmembrane segment at 787–807 (TPLVTYSYLGMWSFSLLLLAL) threads the bilayer. Topologically, residues 808–817 (PQQAYALDTT) are lumenal. Residues 818–838 (EQGQIGLVLLVVISVFTLSPA) traverse the membrane as a helical segment. The Cytoplasmic segment spans residues 839–885 (YKILLCRSLWWLSYLLVRAEALIQDWVPPWQARGGRDGIIWAATIFC). Residues 886–906 (PGVLFDITNWLLAILGPGYLL) form a helical membrane-spanning segment. Residues 903-1030 (GYLLRSVLTS…EYTSKGWKLL (128 aa)) enclose the Peptidase C18 domain. Over 907 to 932 (RSVLTSTPYFVRAQALLRICAAVRHL) the chain is Lumenal. The tract at residues 908 to 1210 (SVLTSTPYFV…PIESLDVIIR (303 aa)) is protease NS2-3. The S-palmitoyl cysteine; by host moiety is linked to residue Cys-926. The helical transmembrane segment at 933–953 (SGGKYVQMMLLTLGKWTGTYI) threads the bilayer. Positions 933–953 (SGGKYVQMMLLTLGKWTGTYI) are interaction with host SCPS1. At 954-1661 (YDHLSPMSGW…CMQADLEIMT (708 aa)) the chain is on the cytoplasmic side. Active-site for protease NS2 activity; shared with dimeric partner residues include His-956, Glu-976, and Cys-997. Positions 1031 to 1212 (APITAYAQQT…ESLDVIIRSP (182 aa)) constitute a Peptidase S29 domain. Active-site charge relay system; for serine protease NS3 activity residues include His-1087 and Asp-1111. Residues Cys-1127 and Cys-1129 each coordinate Zn(2+). Residue Ser-1169 is the Charge relay system; for serine protease NS3 activity of the active site. Zn(2+) is bound by residues Cys-1175 and His-1179. The Helicase ATP-binding domain occupies 1221–1373 (PAVPQTYQVG…PNIEEVALGH (153 aa)). 1234–1241 (APTGSGKS) provides a ligand contact to ATP. Residues Ser-1241 and Glu-1321 each coordinate Mg(2+). The DECH box signature appears at 1320 to 1323 (DECH). Positions 1490-1502 (QRRGRTGRGRLGI) are RNA-binding. The chain crosses the membrane as a helical span at residues 1662-1682 (STWVLAGGVLAAIAAYCLATG). The segment at 1683 to 1694 (CVVCIGRVNINQ) is NS3-binding. Residues 1683-1809 (CVVCIGRVNI…ALTSPLPTST (127 aa)) lie on the Cytoplasmic side of the membrane. The helical transmembrane segment at 1810-1830 (TILLNIMGGWLASQIAPAAGA) threads the bilayer. Residues 1831-1832 (TG) are Lumenal-facing. Residues 1833–1853 (FVVSGLVGAAVGSIGLGKILV) form a helical membrane-spanning segment. Residue Asp-1854 is a topological domain, cytoplasmic. A helical membrane pass occupies residues 1855–1875 (VLAGYGAGISGALVAFKIMSG). The Lumenal segment spans residues 1876–1885 (EKPSVEDVVN). Residues 1886–1906 (LLPGILSPGALVVGVICAAIL) traverse the membrane as a helical segment. At 1907 to 1976 (RRHVGQGEGA…WITEDCPVPC (70 aa)) the chain is on the cytoplasmic side. The S-palmitoyl cysteine; by host moiety is linked to residue Cys-1976. An intramembrane segment occupies 1977–2007 (AGSWLRDIWDWACTILTDFKNWLSTKLLPKM). The Cytoplasmic portion of the chain corresponds to 2008–3012 (PGLPFISCQR…YHSVSRARPR (1005 aa)). Residues Cys-2015, Cys-2033, Cys-2035, and Cys-2056 each coordinate Zn(2+). Residues 2124-2212 (EFFSWVDGVQ…ASSSASQLSA (89 aa)) form an FKBP8-binding region. The interval 2124-2332 (EFFSWVDGVQ…PTPPPRRRRA (209 aa)) is transcriptional activation. The tract at residues 2139 to 2143 (PTPKP) is interaction with non-structural protein 4A. Residues 2193 to 2212 (RLARGSPPSEASSSASQLSA) form a disordered region. Positions 2193-2460 (RLARGSPPSE…ALITPCGPEE (268 aa)) are interaction with host SKP2. Phosphoserine; by host is present on residues Ser-2198, Ser-2201, Ser-2205, Ser-2208, Ser-2211, and Ser-2214. Low complexity predominate over residues 2198-2212 (SPPSEASSSASQLSA). Residues 2214–2249 (SLRATCTAHAKNYAVEMVDANFFMGSDVTRIESETK) form an ISDR region. An interaction with EIF2AK2/PKR region spans residues 2214–2275 (SLRATCTAHA…REPSVPSEYL (62 aa)). Residues 2249–2306 (KVLILDSLDPSVEEEDEREPSVPSEYLLPKKKFPQALPVWARPDYNPPVVETWKRPDY) form an NS4B-binding region. The segment at 2299 to 2376 (ETWKRPDYDP…MDTTDATDQP (78 aa)) is V3. Residues 2308-2328 (PPTVSGCALPPRVTAPTPPPR) form a disordered region. The SH3-binding motif lies at 2322 to 2325 (APTP). Residues 2327-2335 (PRRRRALVL) carry the Nuclear localization signal motif. Lys-2350 is covalently cross-linked (Glycyl lysine isopeptide (Lys-Gly) (interchain with G-Cter in ubiquitin)). Residues 2353 to 2431 (GQLPPSCDSG…PDLDSGSWST (79 aa)) are disordered. Residues 2361 to 2373 (SGRSTGMDTTDAT) show a composition bias toward polar residues. Residues Ser-2471 and Ser-2484 each carry the phosphoserine; by host modification. Residues 2656 to 2774 (PMGFSYDTRC…ISESQGAEED (119 aa)) form the RdRp catalytic domain. Residues Asp-2662, Asp-2760, and Asp-2761 each coordinate Mg(2+). The chain crosses the membrane as a helical span at residues 3013–3033 (FLLLCLLLLSVGVGIFLLPAR).

The protein belongs to the hepacivirus polyprotein family. Homooligomer. Interacts with E1 (via C-terminus). Interacts with the non-structural protein 5A. Interacts (via N-terminus) with host STAT1 (via SH2 domain); this interaction results in decreased STAT1 phosphorylation and ubiquitin-mediated proteasome-dependent STAT1 degradation, leading to decreased IFN-stimulated gene transcription. Interacts with host STAT3; this interaction constitutively activates STAT3. Interacts with host LTBR receptor. Interacts with host TNFRSF1A receptor and possibly induces apoptosis. Interacts with host HNRPK. Interacts with host YWHAE. Interacts with host UBE3A/E6AP. Interacts with host DDX3X. Interacts with host APOA2. Interacts with host RXRA protein. Interacts with host SP110 isoform 3/Sp110b; this interaction sequesters the transcriptional corepressor SP110 away from the nucleus. Interacts with host CREB3 nuclear transcription protein; this interaction triggers cell transformation. Interacts with host ACY3. Interacts with host C1QR1. Interacts with host RBM24; this interaction, which enhances the interaction of the mature core protein with 5'-UTR, may inhibit viral translation and favor replication. Interacts with host EIF2AK2/PKR; this interaction induces the autophosphorylation of EIF2AK2. Part of the viral assembly initiation complex composed of NS2, E1, E2, NS3, NS4A, NS5A and the mature core protein. As to quaternary structure, forms a heterodimer with envelope glycoprotein E2. Interacts with mature core protein. Interacts with protease NS2. The heterodimer E1/E2 interacts with host CLDN1; this interaction plays a role in viral entry into host cell. Interacts with host SPSB2 (via C-terminus). Part of the viral assembly initiation complex composed of NS2, E1, E2, NS3, NS4A, NS5A and the mature core protein. Interacts with host NEURL3; this interaction prevents E1 binding to glycoprotein E2. In terms of assembly, forms a heterodimer with envelope glycoprotein E1. Interacts with host CD81 and SCARB1 receptors; these interactions play a role in viral entry into host cell. Interacts with host EIF2AK2/PKR; this interaction inhibits EIF2AK2 and probably allows the virus to evade the innate immune response. Interacts with host CD209/DC-SIGN and CLEC4M/DC-SIGNR. Interact with host SPCS1; this interaction is essential for viral particle assembly. Interacts with protease NS2. The heterodimer E1/E2 interacts with host CLDN1; this interaction plays a role in viral entry into host cell. Part of the viral assembly initiation complex composed of NS2, E1, E2, NS3, NS4A, NS5A and the mature core protein. Interacts with host SLC3A2/4F2hc; the interaction may facilitate viral entry into host cell. Interacts with human PLSCR1. Homohexamer. Homoheptamer. Interacts with protease NS2. As to quaternary structure, homodimer. Interacts with host SPCS1; this interaction is essential for viral particle assembly. Interacts with envelope glycoprotein E1. Interacts with envelope glycoprotein E2. Interacts with viroporin p7. Interacts with serine protease/helicase NS3. Part of the replication complex composed of NS2, NS3, NS4A, NS4B, NS5A and the RNA-directed RNA polymerase embedded in an ER-derived membranous web. Part of the viral assembly initiation complex composed of NS2, E1, E2, NS3, NS4A, NS5A and the mature core protein. In terms of assembly, interacts with protease NS2. Interacts with non-structural protein 4A; this interaction stabilizes the folding of NS3 serine protease. NS3-NS4A interaction is essential for NS3 activation and allows membrane anchorage of the latter. NS3/NS4A complex also prevents phosphorylation of host IRF3, thus preventing the establishment of dsRNA induced antiviral state. Interacts with host MAVS; this interaction leads to the cleavage and inhibition of host MAVS. Interacts with host TICAM1; this interaction leads to the cleavage and inhibition of host TICAM1. Interacts with host TANK-binding kinase/TBK1; this interaction results in the inhibition of the association between TBK1 and IRF3, which leads to the inhibition of IRF3 activation. Interacts with host RBM24. Part of the replication complex composed of NS2, NS3, NS4A, NS4B, NS5A and the RNA-directed RNA polymerase embedded in an ER-derived membranous web. Part of the viral assembly initiation complex composed of NS2, E1, E2, NS3, NS4A, NS5A and the mature core protein. Interacts with NS3 serine protease; this interaction stabilizes the folding of NS3 serine protease. NS3-NS4A interaction is essential for NS3 activation and allows membrane anchorage of the latter. Interacts with non-structural protein 5A (via N-terminus). Part of the replication complex composed of NS2, NS3, NS4A, NS4B, NS5A and the RNA-directed RNA polymerase embedded in an ER-derived membranous web. Part of the viral assembly initiation complex composed of NS2, E1, E2, NS3, NS4A, NS5A and the mature core protein. As to quaternary structure, homomultimer. Interacts with non-structural protein NS5A. Interacts with host PLA2G4C; this interaction likely initiates the recruitment of replication complexes to lipid droplets. Interacts with host STING; this interaction disrupts the interaction between STING and TBK1 thereby suppressing the interferon signaling. Part of the replication complex composed of NS2, NS3, NS4A, NS4B, NS5A and the RNA-directed RNA polymerase embedded in an ER-derived membranous web. In terms of assembly, monomer. Homodimer; dimerization is required for RNA-binding. Interacts with the mature core protein. Interacts (via N-terminus) with non-structural protein 4A. Interacts with non-structural protein 4B. Interacts (via region D2) with RNA-directed RNA polymerase. Part of the viral assembly initiation complex composed of NS2, E1, E2, NS3, NS4A, NS5A and the mature core protein. Part of the replication complex composed of NS2, NS3, NS4A, NS4B, NS5A and the RNA-directed RNA polymerase embedded in an ER-derived membranous web. Interacts with host GRB2. Interacts with host BIN1. Interacts with host PIK3R1. Interacts with host SRCAP. Interacts with host FKBP8. Interacts (via C-terminus) with host VAPB (via MSP domain). Interacts with host EIF2AK2/PKR; this interaction leads to disruption of EIF2AK2 dimerization by NS5A and probably allows the virus to evade the innate immune response. Interacts (via N-terminus) with host PACSIN2 (via N-terminus); this interaction attenuates protein kinase C alpha-mediated phosphorylation of PACSIN2 by disrupting the interaction between PACSIN2 and PRKCA. Interacts (via N-terminus) with host SRC kinase (via SH2 domain). Interacts with most Src-family kinases. Interacts with host IFI27 and SKP2; promotes the ubiquitin-mediated proteasomal degradation of NS5A. Interacts with host GPS2. Interacts with host TNFRSF21; this interaction allows the modulation by the virus of JNK, p38 MAPK, STAT3, and Akt signaling pathways in a DR6-dependent manner. Interacts (via N-terminus) with host CIDEB (via N-terminus); this interaction seems to regulate the association of HCV particles with APOE. Interacts with host CHKA/Choline Kinase-alpha; CHKA bridges host PI4KA and NS5A and potentiates NS5A-stimulated PI4KA activity, which then facilitates the targeting of the ternary complex to the ER for viral replication. Interacts with host SPSB2 (via C-terminus); this interaction targets NS5A for ubiquitination and degradation. Interacts with host RAB18; this interaction may promote the association of NS5A and other replicase components with lipid droplets. Interacts (via region D2) with host PPIA/CYPA; the interaction stimulates RNA-binding ability of NS5A and is dependent on the peptidyl-prolyl cis-trans isomerase activity of PPIA/CYPA. Interacts with host TRIM14; this interaction induces the degradation of NS5A. Homooligomer. Interacts with non-structural protein 5A. Interacts with host VAPB. Interacts with host PRK2/PKN2. Interacts with host HNRNPA1 and SEPT6; these interactions facilitate viral replication. Part of the replication complex composed of NS2, NS3, NS4A, NS4B, NS5A and the RNA-directed RNA polymerase. Zn(2+) serves as cofactor. The cofactor is Mg(2+). Specific enzymatic cleavages in vivo yield mature proteins. The structural proteins, core, E1, E2 and p7 are produced by proteolytic processing by host signal peptidases. The core protein precursor is synthesized as a 23 kDa, which is retained in the ER membrane through the hydrophobic signal peptide. Cleavage by the signal peptidase releases the 21 kDa mature core protein. The cleavage of the core protein precursor occurs between aminoacids 176 and 188 but the exact cleavage site is not known. Some degraded forms of the core protein appear as well during the course of infection. The other proteins (p7, NS2, NS3, NS4A, NS4B, NS5A and NS5B) are cleaved by the viral proteases. Autoprocessing between NS2 and NS3 is mediated by the NS2 cysteine protease catalytic domain and regulated by the NS3 N-terminal domain. In terms of processing, phosphorylated by host PKC and PKA. Post-translationally, ubiquitinated; mediated by UBE3A and leading to core protein subsequent proteasomal degradation. Highly N-glycosylated. In terms of processing, palmitoylation is required for NS2/3 autoprocessing and E2 recruitment to membranes. Post-translationally, palmitoylated. This modification may play a role in its polymerization or in protein-protein interactions. Phosphorylated on serines in a basal form termed p56. p58 is a hyperphosphorylated form of p56. p56 and p58 coexist in the cell in roughly equivalent amounts. Hyperphosphorylation is dependent on the presence of NS4A. Host CSNK1A1/CKI-alpha or RPS6KB1 kinases may be responsible for NS5A phosphorylation. In terms of processing, tyrosine phosphorylation is essential for the interaction with host SRC. Post-translationally, ubiquitinated. Ubiquitination, most probably at Lys-2350, mediated by host IFI27 and SKP2 leads to proteasomal degradation, restricting viral infection. Ubiquitination by host TRIM22 leads to interruption of viral replication. The N-terminus is phosphorylated by host PRK2/PKN2.

Its subcellular location is the host endoplasmic reticulum membrane. It is found in the host mitochondrion membrane. It localises to the virion. The protein localises to the host cytoplasm. The protein resides in the host nucleus. Its subcellular location is the host lipid droplet. It is found in the virion membrane. It localises to the host mitochondrion. The protein localises to the host cell membrane. The protein resides in the host perinuclear region. The catalysed reaction is Hydrolysis of four peptide bonds in the viral precursor polyprotein, commonly with Asp or Glu in the P6 position, Cys or Thr in P1 and Ser or Ala in P1'.. The enzyme catalyses a ribonucleoside 5'-triphosphate + H2O = a ribonucleoside 5'-diphosphate + phosphate + H(+). It catalyses the reaction ATP + H2O = ADP + phosphate + H(+). It carries out the reaction RNA(n) + a ribonucleoside 5'-triphosphate = RNA(n+1) + diphosphate. With respect to regulation, inhibited by the antiviral drug hexamethylene amiloride. Inhibition by amantadine appears to be genotype-dependent. Also inhibited by long-alkyl-chain iminosugar derivatives. Activity is up-regulated by PRK2/PKN2-mediated phosphorylation. Functionally, packages viral RNA to form a viral nucleocapsid, and promotes virion budding. Participates in the viral particle production as a result of its interaction with the non-structural protein 5A. Binds RNA and may function as a RNA chaperone to induce the RNA structural rearrangements taking place during virus replication. Modulates viral translation initiation by interacting with viral IRES and 40S ribosomal subunit. Affects various cell signaling pathways, host immunity and lipid metabolism. Prevents the establishment of cellular antiviral state by blocking the interferon-alpha/beta (IFN-alpha/beta) and IFN-gamma signaling pathways and by blocking the formation of phosphorylated STAT1 and promoting ubiquitin-mediated proteasome-dependent degradation of STAT1. Activates STAT3 leading to cellular transformation. Regulates the activity of cellular genes, including c-myc and c-fos. May repress the promoter of p53, and sequester CREB3 and SP110 isoform 3/Sp110b in the cytoplasm. Represses cell cycle negative regulating factor CDKN1A, thereby interrupting an important check point of normal cell cycle regulation. Targets transcription factors involved in the regulation of inflammatory responses and in the immune response: suppresses TNF-induced NF-kappa-B activation, and activates AP-1. Binds to dendritic cells (DCs) via C1QR1, resulting in down-regulation of T-lymphocytes proliferation. Alters lipid metabolism by interacting with hepatocellular proteins involved in lipid accumulation and storage. Induces up-regulation of FAS promoter activity, and thereby contributes to the increased triglyceride accumulation in hepatocytes (steatosis). Its function is as follows. Forms a heterodimer with envelope glycoprotein E2, which mediates virus attachment to the host cell, virion internalization through clathrin-dependent endocytosis and fusion with host membrane. Fusion with the host cell is most likely mediated by both E1 and E2, through conformational rearrangements of the heterodimer required for fusion rather than a classical class II fusion mechanism. E1/E2 heterodimer binds host apolipoproteins such as APOB and ApoE thereby forming a lipo-viro-particle (LVP). APOE associated to the LVP allows the initial virus attachment to cell surface receptors such as the heparan sulfate proteoglycans (HSPGs), syndecan-1 (SDC1), syndecan-1 (SDC2), the low-density lipoprotein receptor (LDLR) and scavenger receptor class B type I (SCARB1). The cholesterol transfer activity of SCARB1 allows E2 exposure and binding of E2 to SCARB1 and the tetraspanin CD81. E1/E2 heterodimer binding on CD81 activates the epithelial growth factor receptor (EGFR) signaling pathway. Diffusion of the complex E1-E2-EGFR-SCARB1-CD81 to the cell lateral membrane allows further interaction with Claudin 1 (CLDN1) and occludin (OCLN) to finally trigger HCV entry. In terms of biological role, forms a heterodimer with envelope glycoprotein E1, which mediates virus attachment to the host cell, virion internalization through clathrin-dependent endocytosis and fusion with host membrane. Fusion with the host cell is most likely mediated by both E1 and E2, through conformational rearrangements of the heterodimer required for fusion rather than a classical class II fusion mechanism. The interaction between envelope glycoprotein E2 and host apolipoprotein E/APOE allows the proper assembly, maturation and infectivity of the viral particles. This interaction is probably promoted via the up-regulation of cellular autophagy by the virus. E1/E2 heterodimer binds host apolipoproteins such as APOB and APOE thereby forming a lipo-viro-particle (LVP). APOE associated to the LVP allows the initial virus attachment to cell surface receptors such as the heparan sulfate proteoglycans (HSPGs), syndecan-1 (SDC1), syndecan-1 (SDC2), the low-density lipoprotein receptor (LDLR) and scavenger receptor class B type I (SCARB1). The cholesterol transfer activity of SCARB1 allows E2 exposure and binding of E2 to SCARB1 and the tetraspanin CD81. E1/E2 heterodimer binding on CD81 activates the epithelial growth factor receptor (EGFR) signaling pathway. Diffusion of the complex E1-E2-EGFR-SCARB1-CD81 to the cell lateral membrane allows further interaction with Claudin 1 (CLDN1) and occludin (OCLN) to finally trigger HCV entry. Inhibits host EIF2AK2/PKR activation, preventing the establishment of an antiviral state. Viral ligand for CD209/DC-SIGN and CLEC4M/DC-SIGNR, which are respectively found on dendritic cells (DCs), and on liver sinusoidal endothelial cells and macrophage-like cells of lymph node sinuses. These interactions allow the capture of circulating HCV particles by these cells and subsequent facilitated transmission to permissive cells such as hepatocytes and lymphocyte subpopulations. The interaction between E2 and host amino acid transporter complex formed by SLC3A2 and SLC7A5/LAT1 may facilitate viral entry into host cell. Ion channel protein that acts as a viroporin and plays an essential role in the assembly, envelopment and secretion of viral particles. Regulates the host cell secretory pathway, which induces the intracellular retention of viral glycoproteins and favors assembly of viral particles. Creates a pore in acidic organelles and releases Ca(2+) and H(+) in the cytoplasm of infected cells, leading to a productive viral infection. High levels of cytoplasmic Ca(2+) may trigger membrane trafficking and transport of viral ER-associated proteins to viroplasms, sites of viral genome replication. This ionic imbalance induces the assembly of the inflammasome complex, which triggers the maturation of pro-IL-1beta into IL-1beta through the action of caspase-1. Targets also host mitochondria and induces mitochondrial depolarization. In addition of its role as a viroporin, acts as a lipid raft adhesion factor. Functionally, cysteine protease required for the proteolytic auto-cleavage between the non-structural proteins NS2 and NS3. The N-terminus of NS3 is required for the function of NS2 protease (active region NS2-3). Promotes the initiation of viral particle assembly by mediating the interaction between structural and non-structural proteins. Its function is as follows. Displays three enzymatic activities: serine protease with a chymotrypsin-like fold, NTPase and RNA helicase. NS3 serine protease, in association with NS4A, is responsible for the cleavages of NS3-NS4A, NS4A-NS4B, NS4B-NS5A and NS5A-NS5B. The NS3/NS4A complex prevents phosphorylation of host IRF3, thus preventing the establishment of dsRNA induced antiviral state. The NS3/NS4A complex induces host amino acid transporter component SLC3A2, thus contributing to HCV propagation. NS3 RNA helicase binds to RNA and unwinds both dsDNA and dsRNA in the 3' to 5' direction, and likely resolves RNA complicated stable secondary structures in the template strand. Binds a single ATP and catalyzes the unzipping of a single base pair of dsRNA. Inhibits host antiviral proteins TBK1 and IRF3 thereby preventing the establishment of an antiviral state. Cleaves host MAVS/CARDIF thereby preventing the establishment of an antiviral state. Cleaves host TICAM1/TRIF, thereby disrupting TLR3 signaling and preventing the establishment of an antiviral state. In terms of biological role, peptide cofactor which forms a non-covalent complex with the N-terminal of NS3 serine protease. The NS3/NS4A complex prevents phosphorylation of host IRF3, thus preventing the establishment of dsRNA induced antiviral state. The NS3/NS4A complex induces host amino acid transporter component SLC3A2, thus contributing to HCV propagation. Induces a specific membrane alteration that serves as a scaffold for the virus replication complex. This membrane alteration gives rise to the so-called ER-derived membranous web that contains the replication complex. NS4B self-interaction contributes to its function in membranous web formation. Promotes host TRIF protein degradation in a CASP8-dependent manner thereby inhibiting host TLR3-mediated interferon signaling. Disrupts the interaction between STING and TBK1 contributing to the inhibition of interferon signaling. Functionally, phosphorylated protein that is indispensable for viral replication and assembly. Both hypo- and hyperphosphorylated states are required for the viral life cycle. The hyperphosphorylated form of NS5A is an inhibitor of viral replication. Involved in RNA-binding and especially in binding to the viral genome. Zinc is essential for RNA-binding. Participates in the viral particle production as a result of its interaction with the mature viral core protein. Its interaction with host VAPB may target the viral replication complex to vesicles. Down-regulates viral IRES translation initiation. Mediates interferon resistance, presumably by interacting with and inhibiting host EIF2AK2/PKR. Prevents BIN1-induced apoptosis. Acts as a transcriptional activator of some host genes important for viral replication when localized in the nucleus. Via the interaction with host PACSIN2, modulates lipid droplet formation in order to promote virion assembly. Modulates TNFRSF21/DR6 signaling pathway for viral propagation. Its function is as follows. RNA-dependent RNA polymerase that performs primer-template recognition and RNA synthesis during viral replication. Initiates RNA transcription/replication at a flavin adenine dinucleotide (FAD), resulting in a 5'- FAD cap on viral RNAs. In this way, recognition of viral 5' RNA by host pattern recognition receptors can be bypassed, thereby evading activation of antiviral pathways. The sequence is that of Genome polyprotein from Hepatitis C virus genotype 2k (isolate VAT96) (HCV).